A 590-amino-acid chain; its full sequence is Beta-fructofuranosidase, cell wall isozyme (590 aa).

The N-terminal stretch at 1-28 (MGTRPRGVVLAPWAVVLVLVLALRLAGA) is a signal peptide. Residue aspartate 68 is part of the active site. 2 N-linked (GlcNAc...) asparagine glycosylation sites follow: asparagine 190 and asparagine 341.

Belongs to the glycosyl hydrolase 32 family.

The protein resides in the secreted. Its subcellular location is the cell wall. It carries out the reaction Hydrolysis of terminal non-reducing beta-D-fructofuranoside residues in beta-D-fructofuranosides.. This Zea mays (Maize) protein is Beta-fructofuranosidase, cell wall isozyme.